Here is an 86-residue protein sequence, read N- to C-terminus: MNTKEPHKRLVQGKVISKFAEKSAVILVERKVVHEKYRKIVKKFKKYTIHDENNQVKVGDFVSAIECRPLSKTKSFTLKEILVVGV.

The protein belongs to the universal ribosomal protein uS17 family. Part of the 30S ribosomal subunit.

In terms of biological role, one of the primary rRNA binding proteins, it binds specifically to the 5'-end of 16S ribosomal RNA. The protein is Small ribosomal subunit protein uS17 of Helicobacter pylori (strain P12).